A 208-amino-acid chain; its full sequence is Outer-membrane lipoprotein carrier protein (208 aa).

The N-terminal stretch at methionine 1–alanine 21 is a signal peptide.

The protein belongs to the LolA family. In terms of assembly, monomer.

It is found in the periplasm. Functionally, participates in the translocation of lipoproteins from the inner membrane to the outer membrane. Only forms a complex with a lipoprotein if the residue after the N-terminal Cys is not an aspartate (The Asp acts as a targeting signal to indicate that the lipoprotein should stay in the inner membrane). This is Outer-membrane lipoprotein carrier protein from Pseudomonas paraeruginosa (strain DSM 24068 / PA7) (Pseudomonas aeruginosa (strain PA7)).